Reading from the N-terminus, the 220-residue chain is Ribose-5-phosphate isomerase A (220 aa).

Substrate contacts are provided by residues 25–28, 80–83, and 93–96; these read TGST, DGAD, and KGGG. Glutamate 102 acts as the Proton acceptor in catalysis. Lysine 120 is a substrate binding site.

Belongs to the ribose 5-phosphate isomerase family. In terms of assembly, homodimer.

The enzyme catalyses aldehydo-D-ribose 5-phosphate = D-ribulose 5-phosphate. The protein operates within carbohydrate degradation; pentose phosphate pathway; D-ribose 5-phosphate from D-ribulose 5-phosphate (non-oxidative stage): step 1/1. Catalyzes the reversible conversion of ribose-5-phosphate to ribulose 5-phosphate. This Bacillus cereus (strain ATCC 14579 / DSM 31 / CCUG 7414 / JCM 2152 / NBRC 15305 / NCIMB 9373 / NCTC 2599 / NRRL B-3711) protein is Ribose-5-phosphate isomerase A.